The following is a 350-amino-acid chain: MFNQLSDEQKMLKKLALLSGIKPCTASSMLFSFPYSQQKLIDASTQKLFDLFGKLRNTDRLKFLIEEAIDRGIDIDVQDKDGFTLLHKSINERDYNIAGFLLERKANPNIHDRDIVTPLNRIAGKPLSKTEEDFHMAKLLLQKGALTEPTDFSGWTPIQYAVFNEKIGIVELLIDYGANLDIIVPKGFYKGKNLIELVRAISSIFSDQSLNKQLQTLLKLATACQNNDFGLVDYSVKKENSDTEDDSVTKEDIEKFINHKISIKPSVKLLPKYLKELIRLKGFLETKEEFIKDNTIKRLEDNINSKSSLKYLLLSKIVESPSLYKFDVGMPEDLKESLEEHGLKLVGDID.

ANK repeat units lie at residues 81-110 (DGFT…NPNI), 114-151 (DIVT…EPTD), and 153-182 (SGWT…NLDI).

The polypeptide is Putative ankyrin repeat protein RBE_0589 (Rickettsia bellii (strain RML369-C)).